Consider the following 525-residue polypeptide: MANNITLTGLLKKAAAEFSDRRAILVSGEFHLTHARLQEIVDHAASLLLASGVGHGDVVALTFPNTIEYIVMFLAVIRCRAVAAPLNSAYTAEEFEFYLSDSESKLLITPPKGIEAARAAASKLNITHVTATLPGGDGLIALSPSPNNESSLDAVAELTNDPSDVSLFLHTSGTTSRPKGVPLTQLNLASSVQNIKSVYKLSESDSTVVVLPLFHVHGMIAGLLSSLIAGSAVTLPAAGRFSASTFWSDMIACNATWYTAVPTIHQIILDRHLNKPEPTYPKLRFIRSCSASLAPTIMGRLEESFGAPVLEAYAMTEAAHLMASNPLPEDGGHKPGSVGKPVGQEMAILDLNGSAQLPGFSGEVCIRGPNVTKGYKNNPEANKAAFQFGWFHTGDVGYFDEDGYLHLVGRIKELINRGGEKISPIEVDAVLLSHPDLAQAVAFGVPDDKYGEEINCAVIPREGSEVDEDGVLRFCKKNLAAFKVPKKVFITDSLPKTATGKIQRRIVAEHFLAQISTAKVPKFGA.

ATP-binding positions include 171-179, 311-316, aspartate 395, 407-410, and lysine 501; these read TSGTTSRPK, EAYAMT, and LVGR. The segment at 242-311 is SBD1; the sequence is SASTFWSDMI…EESFGAPVLE (70 aa). Positions 312 to 375 are SBD2; it reads AYAMTEAAHL…IRGPNVTKGY (64 aa).

Belongs to the ATP-dependent AMP-binding enzyme family.

It is found in the cytoplasm. The protein localises to the cytosol. The chain is Probable CoA ligase CCL9 from Humulus lupulus (European hop).